The primary structure comprises 286 residues: Energy-coupling factor transporter ATP-binding protein EcfA2 (286 aa).

The region spanning 3–245 (IKIENLTYTY…IDTLEKVGLA (243 aa)) is the ABC transporter domain. An ATP-binding site is contributed by 40-47 (GHTGSGKS).

This sequence belongs to the ABC transporter superfamily. Energy-coupling factor EcfA family. In terms of assembly, forms a stable energy-coupling factor (ECF) transporter complex composed of 2 membrane-embedded substrate-binding proteins (S component), 2 ATP-binding proteins (A component) and 2 transmembrane proteins (T component).

The protein resides in the cell membrane. In terms of biological role, ATP-binding (A) component of a common energy-coupling factor (ECF) ABC-transporter complex. Unlike classic ABC transporters this ECF transporter provides the energy necessary to transport a number of different substrates. The protein is Energy-coupling factor transporter ATP-binding protein EcfA2 of Clostridium acetobutylicum (strain ATCC 824 / DSM 792 / JCM 1419 / IAM 19013 / LMG 5710 / NBRC 13948 / NRRL B-527 / VKM B-1787 / 2291 / W).